The following is a 108-amino-acid chain: Probable chaperone-like protein YdbL (108 aa).

An N-terminal signal peptide occupies residues 1–21 (MKKTLLLCAFLVGLVSSNVMA).

The protein localises to the periplasm. Functionally, probably acts as a chaperone-like protein that contributes to, but is not required for, the formation of the YdbH-YnbE intermembrane bridge. Affects the function and the structure of the YdbH-YnbE complex. Overexpression of ydbL causes a negative effect on YdbH-YnbE function. This chain is Probable chaperone-like protein YdbL (ydbL), found in Escherichia coli (strain K12).